The primary structure comprises 1130 residues: Integrin alpha-6 (1130 aa).

A signal peptide spans 1-23 (MAAAGQLCLLYLSAGLLSRLGAA). Over 24–1050 (FNLDTREDNV…FPSKTVAQYS (1027 aa)) the chain is Extracellular. FG-GAP repeat units follow at residues 30-95 (EDNV…GPCT), 101-166 (NDAD…IEDD), 176-229 (DGRL…FFDM), 283-339 (EQPD…KSAH), 340-402 (LLPE…RWNN), 403-458 (VKPI…GINT), and 459-518 (KPTQ…VTPN). Asparagine 78 carries an N-linked (GlcNAc...) asparagine glycan. 3 disulfides stabilise this stretch: cysteine 86–cysteine 94, cysteine 131–cysteine 154, and cysteine 175–cysteine 188. N-linked (GlcNAc...) asparagine glycosylation is found at asparagine 223 and asparagine 323. Ca(2+)-binding residues include aspartate 363, asparagine 365, aspartate 367, and aspartate 371. A glycan (N-linked (GlcNAc...) asparagine) is linked at asparagine 409. The Ca(2+) site is built by aspartate 425, asparagine 427, aspartate 429, tyrosine 431, aspartate 433, aspartate 480, aspartate 482, asparagine 484, tyrosine 486, and aspartate 488. 4 cysteine pairs are disulfide-bonded: cysteine 528–cysteine 535, cysteine 541–cysteine 601, cysteine 665–cysteine 671, and cysteine 765–cysteine 776. N-linked (GlcNAc...) asparagine glycosylation is found at asparagine 770, asparagine 787, asparagine 930, and asparagine 966. Cystine bridges form between cysteine 920/cysteine 967 and cysteine 973/cysteine 978. A glycan (N-linked (GlcNAc...) asparagine) is linked at asparagine 997. Residues 1051-1076 (GVPWWIILVAILAGILMLALLVFILW) form a helical membrane-spanning segment. Valine 1059 and glycine 1064 each carry phosphoserine. The segment at 1077–1083 (KCGFFKR) is interaction with HPS5. Residues 1077–1130 (KCGFFKRSRYDDSVPRYHAVRIRKEEREIKDEKYIDNLEKKQWITKWNENESYS) lie on the Cytoplasmic side of the membrane. Cysteine 1078 carries S-palmitoyl cysteine; by DHHC3 lipidation. Residues 1079–1083 (GFFKR) carry the GFFKR motif motif. Position 1103 is a phosphoserine (arginine 1103).

Belongs to the integrin alpha chain family. In terms of assembly, heterodimer of an alpha and a beta subunit. The alpha subunit is composed of a heavy and a light chain linked by a disulfide bond. Alpha-6 associates with either beta-1 (ITGB1) or beta-4 (ITGB4) to form ITGA6:ITGB1 and ITGA6:ITGB4, respectively. ITGA6:ITGB1 is found in a complex with CD9; interaction takes place in oocytes and is involved in sperm-egg fusion. ITGA6:ITGB4 is found in a ternary complex with NRG1 and ERBB3. ITGA6:ITGB4 is found in a ternary complex with IGF1 and IGF1R. ITGA6:ITGB4 interacts with IGF2. Interacts with ADAM9. Interacts with RAB21. Interacts with MDK. ITGA6:ITGB1 interacts with MDK; this interaction mediates MDK-induced neurite outgrowth. Interacts with CD82; this interaction down-regulates ITGA6-mediated cell adhesion. In terms of processing, isoforms containing segment A, but not segment B, are the major targets for PMA-induced phosphorylation. Phosphorylation occurs on 'Ser-1103' of isoform alpha-6X1X2A. Phosphorylation is not required for the induction of integrin alpha-6A/beta-1 high affinity but may reduce the affinity for ligand. Undergoes PLAU-mediated cleavage at residues Arg-634-635-Arg in a time-dependent manner to produce processed integrin alpha-6 (alpha6p). Production of alpha6p enhances prostate cancer cell invasion and migration. Post-translationally, palmitoylation by DHHC3 enhances stability and cell surface expression. Integrin alpha-6/beta-4 is predominantly expressed by epithelia. Isoforms containing segment X1 are ubiquitously expressed. Isoforms containing segment X1X2 are expressed in heart, kidney, placenta, colon, duodenum, myoblasts and myotubes, and in a limited number of cell lines; they are always coexpressed with the ubiquitous isoform containing segment X1. In some tissues (e.g. Salivary gland), isoforms containing cytoplasmic segment A and isoforms containing segment B are detected while in others, only isoforms containing one cytoplasmic segment are found (segment A in epidermis and segment B in kidney). Processed integrin alpha-6: Expressed at low levels in normal prostate tissue with elevated levels in prostate cancer tissue (at protein level).

The protein resides in the cell membrane. Functionally, integrin alpha-6/beta-1 (ITGA6:ITGB1) is a receptor for laminin on platelets. Integrin alpha-6/beta-1 (ITGA6:ITGB1) is present in oocytes and is involved in sperm-egg fusion. Integrin alpha-6/beta-4 (ITGA6:ITGB4) is a receptor for laminin in epithelial cells and it plays a critical structural role in the hemidesmosome. ITGA6:ITGB4 binds to NRG1 (via EGF domain) and this binding is essential for NRG1-ERBB signaling. ITGA6:ITGB4 binds to IGF1 and this binding is essential for IGF1 signaling. ITGA6:ITGB4 binds to IGF2 and this binding is essential for IGF2 signaling. This chain is Integrin alpha-6 (ITGA6), found in Homo sapiens (Human).